Reading from the N-terminus, the 165-residue chain is Neuropeptide W (165 aa).

An N-terminal signal peptide occupies residues methionine 1–alanine 32. A propeptide spanning residues alanine 65–phenylalanine 165 is cleaved from the precursor. The segment at serine 106 to phenylalanine 165 is disordered. Residues arginine 113–proline 127 are compositionally biased toward low complexity. Residue serine 133 is glycosylated (O-linked (Xyl...) (chondroitin sulfate) serine).

It belongs to the neuropeptide B/W family. In terms of tissue distribution, detected in cerebrospinal fluid and urine (at protein level). Detected at high levels in the substantia nigra, fetal kidney and trachea; at lower levels in testis, uterus, ovary and placenta. Not detectable in many regions of the central nervous system. Also detected at high levels in lymphoblastic leukemia and colorectal adenocarcinoma.

It is found in the secreted. Functionally, plays a regulatory role in the organization of neuroendocrine signals accessing the anterior pituitary gland. Stimulates water drinking and food intake. May play a role in the hypothalamic response to stress. NPW23 activates GPR7 and GPR8 more efficiently than NPW30. This Homo sapiens (Human) protein is Neuropeptide W (NPW).